The primary structure comprises 92 residues: Small archaeal modifier protein 3 (92 aa).

Residues Lys-18, Lys-55, and Lys-62 each participate in a glycyl lysine isopeptide (Lys-Gly) (interchain with G-Cter in SAMP3) cross-link. The residue at position 92 (Gly-92) is a Glycyl adenylate; alternate. A Glycyl lysine isopeptide (Gly-Lys) (interchain with K-? in acceptor proteins); alternate cross-link involves residue Gly-92.

As to quaternary structure, monomer. In terms of processing, the C-terminal glycine is likely acyl-adenylated (-COAMP) by UbaA.

Functionally, functions as a protein modifier covalently attached to lysine residues of substrate proteins. The protein modification process is termed sampylation and involves the formation of an isopeptide bond between the SAMP3 C-terminal glycine carboxylate and the epsilon-amino group of lysine residues on target proteins. Seems to be able to form polymeric chains with itself at Lys-18, Lys-55 and Lys-62, similar to ubiquitin and other ubiquitin-like proteins. SAMP3 appears not to serve as a proteolytic signal in the cell to target proteins for degradation by proteasomes. May regulate molybdenum cofactor (MoCo) biosynthesis by inhibiting the activity of MPT synthase MoaE under aerobic conditions, providing a hierarchy of oxygen use prior to that of alternative electron acceptors such as DMSO. This chain is Small archaeal modifier protein 3 (samp3), found in Haloferax volcanii (strain ATCC 29605 / DSM 3757 / JCM 8879 / NBRC 14742 / NCIMB 2012 / VKM B-1768 / DS2) (Halobacterium volcanii).